The sequence spans 74 residues: Small ribosomal subunit protein uS8c (74 aa).

It belongs to the universal ribosomal protein uS8 family. In terms of assembly, part of the 30S ribosomal subunit.

It is found in the plastid. The protein resides in the chloroplast. One of the primary rRNA binding proteins, it binds directly to 16S rRNA central domain where it helps coordinate assembly of the platform of the 30S subunit. In Oenothera ammophila (Evening primerose), this protein is Small ribosomal subunit protein uS8c (rps8).